A 123-amino-acid chain; its full sequence is Holo-[acyl-carrier-protein] synthase (123 aa).

Mg(2+) is bound by residues aspartate 8 and glutamate 60.

The protein belongs to the P-Pant transferase superfamily. AcpS family. The cofactor is Mg(2+).

It is found in the cytoplasm. It carries out the reaction apo-[ACP] + CoA = holo-[ACP] + adenosine 3',5'-bisphosphate + H(+). Its function is as follows. Transfers the 4'-phosphopantetheine moiety from coenzyme A to a Ser of acyl-carrier-protein. The sequence is that of Holo-[acyl-carrier-protein] synthase from Ehrlichia ruminantium (strain Welgevonden).